We begin with the raw amino-acid sequence, 141 residues long: Probable spanin, inner membrane subunit (141 aa).

The chain crosses the membrane as a helical; Signal-anchor for type II membrane protein span at residues M1–A17. The Periplasmic segment spans residues G18–Q141. The tract at residues A119 to Q141 is disordered.

Interacts (via C-terminus) with the spanin outer lipoprotein subunit (via C-terminus). Part of the spanin complex which spans the entire periplasmic space. The spanin complex is composed of spanin inner membrane subunit and spanin outer membrane subunit.

It is found in the host cell inner membrane. Functionally, component of the spanin complex that disrupts the host outer membrane and participates in cell lysis during virus exit. The spanin complex conducts the final step in host lysis by disrupting the outer membrane after holin and endolysin action have permeabilized the inner membrane and degraded the host peptidoglycans. Host outer membrane disruption is possibly due to local fusion between the inner and outer membrane performed by the spanin complex. In Escherichia phage P2 (Bacteriophage P2), this protein is Probable spanin, inner membrane subunit (lysB).